A 134-amino-acid polypeptide reads, in one-letter code: ATP synthase epsilon chain (134 aa).

The protein belongs to the ATPase epsilon chain family. F-type ATPases have 2 components, CF(1) - the catalytic core - and CF(0) - the membrane proton channel. CF(1) has five subunits: alpha(3), beta(3), gamma(1), delta(1), epsilon(1). CF(0) has three main subunits: a, b and c.

Its subcellular location is the cell membrane. Its function is as follows. Produces ATP from ADP in the presence of a proton gradient across the membrane. This chain is ATP synthase epsilon chain, found in Clostridium botulinum (strain Alaska E43 / Type E3).